The sequence spans 318 residues: Beta-sarcoglycan (318 aa).

A disordered region spans residues 1–32 (MAAAAAAAAEQQSSNGPVKKSMREKAVERRSV). Residues 1–65 (MAAAAAAAAE…GLRGRKGNLA (65 aa)) are Cytoplasmic-facing. A compositionally biased stretch (basic and acidic residues) spans 21-32 (SMREKAVERRSV). Residues 66-86 (ICVIILLFILAVINLIITLVI) traverse the membrane as a helical; Signal-anchor for type II membrane protein segment. Residues 87–318 (WAVIRIGPNG…ISDNPCGNTH (232 aa)) lie on the Extracellular side of the membrane. Residues Asn158, Asn211, and Asn258 are each glycosylated (N-linked (GlcNAc...) asparagine). Intrachain disulfides connect Cys288-Cys314 and Cys290-Cys307.

Belongs to the sarcoglycan beta/delta/gamma/zeta family. As to quaternary structure, cross-link to form 2 major subcomplexes: one consisting of SGCB, SGCD and SGCG and the other consisting of SGCB and SGCD. The association between SGCB and SGCG is particularly strong while SGCA is loosely associated with the other sarcoglycans. Disulfide bonds are present. Highest expression in heart and skeletal muscle. Low expression in brain, kidney, placenta, pancreas and lung. High expression in fetal brain. Also found in fetal lung, kidney and liver.

Its subcellular location is the cell membrane. The protein localises to the sarcolemma. The protein resides in the cytoplasm. It localises to the cytoskeleton. Its function is as follows. Component of the sarcoglycan complex, a subcomplex of the dystrophin-glycoprotein complex which forms a link between the F-actin cytoskeleton and the extracellular matrix. The sequence is that of Beta-sarcoglycan (SGCB) from Homo sapiens (Human).